The sequence spans 729 residues: MFSALKKLVGSDQAPGRDKNIPAGLQSMNQALQRRFAKGVQYNMKIVIRGDRNTGKTALWHRLQGRPFVEEYIPTQEIQVTSIHWSYKTTDDIVKVEVWDVVDKGKCKKRGDGLKMENDPQEAESEMALDAEFLDVYKNCNGVVMMFDITKQWTFNYILRELPKVPTHVPVCVLGNYRDMGEHRVILPDDVRDFIDNLDRPPGSSYFRYAESSMKNSFGLKYLHKFFNIPFLQLQRETLLRQLETNQLDMDATLEELSVQQETEDQNYGIFLEMMEARSRGHASPLAANGQSPSPGSQSPVVPAGAVSTGSSSPGTPQPAPQLPLNAAPPSSVPPVPPSEALPPPACPSAPAPRRSIISRLFGTSPATEAAPPPPEPVPAAEGPATVQSVEDFVPDDRLDRSFLEDTTPARDEKKVGAKAAQQDSDSDGEALGGNPMVAGFQDDVDLEDQPRGSPPLPAGPVPSQDITLSSEEEAEVAAPTKGPAPAPQQCSEPETKWSSIPASKPRRGTAPTRTAAPPWPGGVSVRTGPEKRSSTRPPAEMEPGKGEQASSSESDPEGPIAAQMLSFVMDDPDFESEGSDTQRRADDFPVRDDPSDVTDEDEGPAEPPPPPKLPLPAFRLKNDSDLFGLGLEEAGPKESSEEGKEGKTPSKEKKKKKKKGKEEEEKAAKKKSKHKKSKDKEEGKEERRRRQQRPPRSRERTAADELEAFLGGGAPGGRHPGGGDYEEL.

An N-acetylmethionine modification is found at Met-1. Residues 39–279 are small GTPase-like; sequence GVQYNMKIVI…IFLEMMEARS (241 aa). Residues 50–57, 100–104, and 177–179 contribute to the GTP site; these read GDRNTGKT, DVVDK, and YRD. The disordered stretch occupies residues 281–729; sequence GHASPLAANG…HPGGGDYEEL (449 aa). Positions 290-315 are enriched in low complexity; sequence GQSPSPGSQSPVVPAGAVSTGSSSPG. The segment covering 331–351 has biased composition (pro residues); it reads SSVPPVPPSEALPPPACPSAP. Residues 395-416 show a composition bias toward basic and acidic residues; the sequence is PDDRLDRSFLEDTTPARDEKKV. Phosphoserine occurs at positions 402, 425, 427, 470, 471, 492, 525, and 577. Residues 489–502 show a composition bias toward polar residues; that stretch reads QQCSEPETKWSSIP. Basic and acidic residues predominate over residues 581–595; that stretch reads DTQRRADDFPVRDDP. Ser-596 is modified (phosphoserine). Acidic residues predominate over residues 596-605; sequence SDVTDEDEGP. A Phosphothreonine modification is found at Thr-599. The segment covering 606-615 has biased composition (pro residues); the sequence is AEPPPPPKLP. Residues 635 to 652 show a composition bias toward basic and acidic residues; it reads AGPKESSEEGKEGKTPSK. Residues Ser-640 and Ser-641 each carry the phosphoserine modification. Residues 655–693 form an interaction with CDKN2A region; sequence KKKKKKGKEEEEKAAKKKSKHKKSKDKEEGKEERRRRQQ. The segment covering 669–678 has biased composition (basic residues); the sequence is AKKKSKHKKS. A compositionally biased stretch (basic and acidic residues) spans 679–689; the sequence is KDKEEGKEERR. Positions 711–729 are enriched in gly residues; that stretch reads LGGGAPGGRHPGGGDYEEL.

The protein belongs to the small GTPase superfamily. Rab family. Post-translationally, isoform 1 is O-glycosylated, while other isoforms are not.

Its subcellular location is the cytoplasm. The protein localises to the nucleus. Its function is as follows. May enhance cellular proliferation. May reduce growth inhibitory activity of CDKN2A. The protein is Rab-like protein 6 (RABL6) of Homo sapiens (Human).